Reading from the N-terminus, the 1070-residue chain is Carbamoyl phosphate synthase large chain (1070 aa).

The tract at residues 1 to 401 (MPKRDDIKTI…ALLKAVRSLE (401 aa)) is carboxyphosphate synthetic domain. ATP contacts are provided by Arg129, Arg169, Gly175, Gly176, Lys208, Ile210, Glu215, Gly241, Ile242, His243, Gln284, and Glu298. The ATP-grasp 1 domain occupies 133-327 (RDLMNELGEP…IAKLAAKIAV (195 aa)). Residues Gln284, Glu298, and Asn300 each coordinate Mg(2+). The Mn(2+) site is built by Gln284, Glu298, and Asn300. An oligomerization domain region spans residues 402–546 (IGADHLLLEE…YSTYEEENES (145 aa)). The segment at 547–929 (TRSAKESVIV…ALYKGFVASG (383 aa)) is carbamoyl phosphate synthetic domain. Positions 671–861 (EKALGILQIP…MANVATRVIL (191 aa)) constitute an ATP-grasp 2 domain. Arg707, Arg746, Val748, Glu752, Gly777, Val778, His779, Ser780, Gln820, and Glu832 together coordinate ATP. Positions 820, 832, and 834 each coordinate Mg(2+). Residues Gln820, Glu832, and Asn834 each contribute to the Mn(2+) site. Residues 930 to 1070 (TTMHDYGTVL…SEVKQPKARV (141 aa)) enclose the MGS-like domain. The allosteric domain stretch occupies residues 930-1070 (TTMHDYGTVL…SEVKQPKARV (141 aa)).

It belongs to the CarB family. Composed of two chains; the small (or glutamine) chain promotes the hydrolysis of glutamine to ammonia, which is used by the large (or ammonia) chain to synthesize carbamoyl phosphate. Tetramer of heterodimers (alpha,beta)4. Requires Mg(2+) as cofactor. The cofactor is Mn(2+).

The enzyme catalyses hydrogencarbonate + L-glutamine + 2 ATP + H2O = carbamoyl phosphate + L-glutamate + 2 ADP + phosphate + 2 H(+). It catalyses the reaction hydrogencarbonate + NH4(+) + 2 ATP = carbamoyl phosphate + 2 ADP + phosphate + 2 H(+). The protein operates within amino-acid biosynthesis; L-arginine biosynthesis; carbamoyl phosphate from bicarbonate: step 1/1. It functions in the pathway pyrimidine metabolism; UMP biosynthesis via de novo pathway; (S)-dihydroorotate from bicarbonate: step 1/3. Large subunit of the glutamine-dependent carbamoyl phosphate synthetase (CPSase). CPSase catalyzes the formation of carbamoyl phosphate from the ammonia moiety of glutamine, carbonate, and phosphate donated by ATP, constituting the first step of 2 biosynthetic pathways, one leading to arginine and/or urea and the other to pyrimidine nucleotides. The large subunit (synthetase) binds the substrates ammonia (free or transferred from glutamine from the small subunit), hydrogencarbonate and ATP and carries out an ATP-coupled ligase reaction, activating hydrogencarbonate by forming carboxy phosphate which reacts with ammonia to form carbamoyl phosphate. This is Carbamoyl phosphate synthase large chain from Listeria monocytogenes serotype 4b (strain CLIP80459).